Consider the following 179-residue polypeptide: uncharacterized protein (179 aa).

Residues 139-172 (IEDLGKYIKSDRIEKEALREELEKILNTLVKHLE) adopt a coiled-coil conformation.

This is an uncharacterized protein from Methanocaldococcus jannaschii (strain ATCC 43067 / DSM 2661 / JAL-1 / JCM 10045 / NBRC 100440) (Methanococcus jannaschii).